We begin with the raw amino-acid sequence, 373 residues long: S-adenosylmethionine:tRNA ribosyltransferase-isomerase (373 aa).

Belongs to the QueA family. As to quaternary structure, monomer.

The protein resides in the cytoplasm. The catalysed reaction is 7-aminomethyl-7-carbaguanosine(34) in tRNA + S-adenosyl-L-methionine = epoxyqueuosine(34) in tRNA + adenine + L-methionine + 2 H(+). It participates in tRNA modification; tRNA-queuosine biosynthesis. Transfers and isomerizes the ribose moiety from AdoMet to the 7-aminomethyl group of 7-deazaguanine (preQ1-tRNA) to give epoxyqueuosine (oQ-tRNA). This chain is S-adenosylmethionine:tRNA ribosyltransferase-isomerase, found in Caulobacter sp. (strain K31).